A 464-amino-acid chain; its full sequence is 3-isopropylmalate dehydratase large subunit (464 aa).

Cysteine 337, cysteine 397, and cysteine 400 together coordinate [4Fe-4S] cluster.

It belongs to the aconitase/IPM isomerase family. LeuC type 1 subfamily. As to quaternary structure, heterodimer of LeuC and LeuD. The cofactor is [4Fe-4S] cluster.

It catalyses the reaction (2R,3S)-3-isopropylmalate = (2S)-2-isopropylmalate. It functions in the pathway amino-acid biosynthesis; L-leucine biosynthesis; L-leucine from 3-methyl-2-oxobutanoate: step 2/4. In terms of biological role, catalyzes the isomerization between 2-isopropylmalate and 3-isopropylmalate, via the formation of 2-isopropylmaleate. The protein is 3-isopropylmalate dehydratase large subunit of Bacillus cereus (strain AH187).